The following is a 369-amino-acid chain: CASP-like protein 4U1 (369 aa).

Residues 1–162 (MASTPRTPAP…RAETKLPLSS (162 aa)) form a disordered region. Residues 1 to 222 (MASTPRTPAP…AVAAVAERRE (222 aa)) lie on the Cytoplasmic side of the membrane. A compositionally biased stretch (pro residues) spans 7–23 (TPAPERSPPPVPTPPPP). Residues 36–51 (SPREEASFSSDGREGA) show a composition bias toward basic and acidic residues. 2 stretches are compositionally biased toward low complexity: residues 87-96 (ANKAAAATAE) and 114-127 (SSQT…SPTP). Residues 223–243 (LLLALRLATAVLSLAAFSVIA) form a helical membrane-spanning segment. Over 244-262 (SARTSGWAGDYYARHLQYR) the chain is Extracellular. Residues 263 to 283 (YAVAVNVIVFAYSVAQSLGKI) form a helical membrane-spanning segment. Residues 284–300 (RHLVSPRFTFRTMSSYY) are Cytoplasmic-facing. Residues 301 to 321 (CSLFLDQVLAYLLMSASSAAA) form a helical membrane-spanning segment. Residues 322 to 339 (SRNDLWVSRFGTDAFVRK) are Extracellular-facing. The chain crosses the membrane as a helical span at residues 340-360 (ITGALWLSFVAFLVLALNAVI). The Cytoplasmic portion of the chain corresponds to 361–369 (SXANLFSMV).

This sequence belongs to the Casparian strip membrane proteins (CASP) family. Homodimer and heterodimers.

The protein localises to the cell membrane. The chain is CASP-like protein 4U1 from Zea mays (Maize).